We begin with the raw amino-acid sequence, 138 residues long: Transcription antitermination protein NusB (138 aa).

It belongs to the NusB family.

In terms of biological role, involved in transcription antitermination. Required for transcription of ribosomal RNA (rRNA) genes. Binds specifically to the boxA antiterminator sequence of the ribosomal RNA (rrn) operons. The protein is Transcription antitermination protein NusB of Geobacter sulfurreducens (strain ATCC 51573 / DSM 12127 / PCA).